Reading from the N-terminus, the 361-residue chain is Peptide chain release factor 1 (361 aa).

Gln233 carries the post-translational modification N5-methylglutamine. Residues 280-293 are compositionally biased toward basic and acidic residues; the sequence is ERRKKEQERADSRR. A disordered region spans residues 280–307; it reads ERRKKEQERADSRRGQVGSGDRSERIRT.

Belongs to the prokaryotic/mitochondrial release factor family. In terms of processing, methylated by PrmC. Methylation increases the termination efficiency of RF1.

The protein localises to the cytoplasm. In terms of biological role, peptide chain release factor 1 directs the termination of translation in response to the peptide chain termination codons UAG and UAA. The chain is Peptide chain release factor 1 from Rickettsia massiliae (strain Mtu5).